Reading from the N-terminus, the 435-residue chain is 4-hydroxy-3-methylbut-2-en-1-yl diphosphate synthase (flavodoxin) (435 aa).

The segment covering 1-15 (MTDVDLRARPQEGMK) has biased composition (basic and acidic residues). The tract at residues 1–24 (MTDVDLRARPQEGMKEIPAGPKGR) is disordered. Positions 316, 319, 362, and 369 each coordinate [4Fe-4S] cluster.

It belongs to the IspG family. Requires [4Fe-4S] cluster as cofactor.

It catalyses the reaction (2E)-4-hydroxy-3-methylbut-2-enyl diphosphate + oxidized [flavodoxin] + H2O + 2 H(+) = 2-C-methyl-D-erythritol 2,4-cyclic diphosphate + reduced [flavodoxin]. The protein operates within isoprenoid biosynthesis; isopentenyl diphosphate biosynthesis via DXP pathway; isopentenyl diphosphate from 1-deoxy-D-xylulose 5-phosphate: step 5/6. In terms of biological role, converts 2C-methyl-D-erythritol 2,4-cyclodiphosphate (ME-2,4cPP) into 1-hydroxy-2-methyl-2-(E)-butenyl 4-diphosphate. The polypeptide is 4-hydroxy-3-methylbut-2-en-1-yl diphosphate synthase (flavodoxin) (Afipia carboxidovorans (strain ATCC 49405 / DSM 1227 / KCTC 32145 / OM5) (Oligotropha carboxidovorans)).